The sequence spans 480 residues: ATP synthase subunit beta, chloroplastic (480 aa).

Residue 161 to 168 (GGAGVGKT) coordinates ATP.

This sequence belongs to the ATPase alpha/beta chains family. In terms of assembly, F-type ATPases have 2 components, CF(1) - the catalytic core - and CF(0) - the membrane proton channel. CF(1) has five subunits: alpha(3), beta(3), gamma(1), delta(1), epsilon(1). CF(0) has four main subunits: a(1), b(1), b'(1) and c(9-12).

It localises to the plastid. The protein resides in the chloroplast thylakoid membrane. The enzyme catalyses ATP + H2O + 4 H(+)(in) = ADP + phosphate + 5 H(+)(out). Produces ATP from ADP in the presence of a proton gradient across the membrane. The catalytic sites are hosted primarily by the beta subunits. This is ATP synthase subunit beta, chloroplastic from Euglena gracilis.